We begin with the raw amino-acid sequence, 168 residues long: Ribosome maturation factor RimP (168 aa).

Belongs to the RimP family.

Its subcellular location is the cytoplasm. In terms of biological role, required for maturation of 30S ribosomal subunits. This chain is Ribosome maturation factor RimP, found in Rickettsia bellii (strain OSU 85-389).